The primary structure comprises 989 residues: Translation initiation factor IF-2 (989 aa).

Disordered stretches follow at residues lysine 43–arginine 219 and glutamate 234–arginine 379. Positions asparagine 72–asparagine 87 are enriched in polar residues. Over residues proline 105–alanine 146 the composition is skewed to low complexity. Residues valine 149–glutamate 159 are compositionally biased toward basic and acidic residues. Residues lysine 160 to serine 171 are compositionally biased toward polar residues. The segment covering glutamate 234 to lysine 293 has biased composition (basic and acidic residues). The span at alanine 294 to alanine 303 shows a compositional bias: low complexity. The span at proline 342–glutamine 361 shows a compositional bias: basic and acidic residues. In terms of domain architecture, tr-type G spans serine 489–lysine 659. A G1 region spans residues glycine 498–threonine 505. A GTP-binding site is contributed by glycine 498 to threonine 505. The G2 stretch occupies residues glycine 523 to histidine 527. Residues aspartate 545–glycine 548 are G3. GTP is bound by residues aspartate 545–histidine 549 and asparagine 599–aspartate 602. Residues asparagine 599–aspartate 602 are G4. A G5 region spans residues serine 635–alanine 637.

This sequence belongs to the TRAFAC class translation factor GTPase superfamily. Classic translation factor GTPase family. IF-2 subfamily.

It localises to the cytoplasm. Functionally, one of the essential components for the initiation of protein synthesis. Protects formylmethionyl-tRNA from spontaneous hydrolysis and promotes its binding to the 30S ribosomal subunits. Also involved in the hydrolysis of GTP during the formation of the 70S ribosomal complex. The chain is Translation initiation factor IF-2 from Zymomonas mobilis subsp. mobilis (strain ATCC 31821 / ZM4 / CP4).